We begin with the raw amino-acid sequence, 326 residues long: Vacuolar protein sorting-associated protein 26A-A (326 aa).

A disordered region spans residues T306 to I326. Low complexity predominate over residues Q315 to I326.

The protein belongs to the VPS26 family. Component of the heterotrimeric retromer cargo-selective complex (CSC) which is believed to associate with variable sorting nexins to form functionally distinct retromer complex variants.

The protein localises to the cytoplasm. The protein resides in the endosome membrane. It is found in the early endosome. Acts as a component of the retromer cargo-selective complex (CSC). The CSC is believed to be the core functional component of retromer or respective retromer complex variants acting to prevent missorting of selected transmembrane cargo proteins into the lysosomal degradation pathway. Retromer mediates retrograde transport of cargo proteins from endosomes to the trans-Golgi network (TGN). The protein is Vacuolar protein sorting-associated protein 26A-A (vps26a-a) of Xenopus laevis (African clawed frog).